We begin with the raw amino-acid sequence, 434 residues long: Glutamyl-tRNA reductase (434 aa).

Substrate is bound by residues 49-52 (TCNR), Ser-114, 119-121 (EPQ), and Gln-125. The active-site Nucleophile is Cys-50. Position 199–204 (199–204 (GAGETI)) interacts with NADP(+).

It belongs to the glutamyl-tRNA reductase family. Homodimer.

The catalysed reaction is (S)-4-amino-5-oxopentanoate + tRNA(Glu) + NADP(+) = L-glutamyl-tRNA(Glu) + NADPH + H(+). Its pathway is porphyrin-containing compound metabolism; protoporphyrin-IX biosynthesis; 5-aminolevulinate from L-glutamyl-tRNA(Glu): step 1/2. Functionally, catalyzes the NADPH-dependent reduction of glutamyl-tRNA(Glu) to glutamate 1-semialdehyde (GSA). This chain is Glutamyl-tRNA reductase, found in Pasteurella multocida (strain Pm70).